Here is a 403-residue protein sequence, read N- to C-terminus: Aurora kinase A (403 aa).

The tract at residues 1–125 (MDRSKENCIS…SKQKNEESKK (125 aa)) is disordered. 2 stretches are compositionally biased toward polar residues: residues 27-83 (VTQQ…QATS) and 91-101 (PLNNTQKSKQP). Phosphoserine is present on residues serine 41 and serine 51. Basic and acidic residues predominate over residues 114-125 (LASKQKNEESKK). The Protein kinase domain maps to 133 to 383 (FEIGRPLGKG…LREVLEHPWI (251 aa)). Residues lysine 143, lysine 162, and 211-213 (EYA) each bind ATP. Aspartate 256 acts as the Proton acceptor in catalysis. Residue lysine 258 forms a Glycyl lysine isopeptide (Lys-Gly) (interchain with G-Cter in SUMO2) linkage. ATP is bound by residues 260-261 (EN) and aspartate 274. The activation segment stretch occupies residues 280 to 293 (HAPSSRRTTLCGTL). Residues threonine 287 and threonine 288 each carry the phosphothreonine modification. Serine 342 carries the post-translational modification Phosphoserine; by PKA and PAK.

The protein belongs to the protein kinase superfamily. Ser/Thr protein kinase family. Aurora subfamily. In terms of assembly, part of a complex composed of NEDD9, AURKA and CTTN; within the complex NEDD9 acts as a scaffold protein and is required for complex formation. Identified in a complex with AUNIP and NIN. Interacts with FBXL7. Interacts with CPEB1, JTB, TACC1, TPX2, PPP2CA, as well as with the protein phosphatase type 1 (PP1) isoforms PPP1CA, PPP1CB and PPP1CC. Also interacts with its substrates ARHGEF2, BORA, KIF2A, PARD3, and p53/TP53. Interaction with BORA promotes phosphorylation of PLK1. Interacts with CIMAP3. Interacts with GADD45A, competing with its oligomerization. Interacts (via C-terminus) with AUNIP (via C-terminus). Interacts with FRY; this interaction facilitates AURKA-mediated PLK1 phosphorylation. Interacts with SIRT2. Interacts with MYCN; interaction is phospho-independent and triggers AURKA activation; AURKA competes with FBXW7 for binding to unphosphorylated MYCN but not for binding to phosphorylated MYCN. Interacts with HNRNPU. Interacts with AAAS. Interacts with KLHL18 and CUL3. Interacts with FOXP1. Interacts with HDAC6; AURKA-mediated phosphorylation of HDAC6 promotes deacetylation of alpha-tubulin. Activated by phosphorylation at Thr-288; this brings about a change in the conformation of the activation segment. Phosphorylation at Thr-288 varies during the cell cycle and is highest during M phase. Autophosphorylated at Thr-288 upon TPX2 binding. Thr-288 can be phosphorylated by several kinases, including PAK and PKA. Protein phosphatase type 1 (PP1) binds AURKA and inhibits its activity by dephosphorylating Thr-288 during mitosis. Phosphorylation at Ser-342 decreases the kinase activity. PPP2CA controls degradation by dephosphorylating Ser-51 at the end of mitosis. In terms of processing, ubiquitinated by the E3 ubiquitin-protein ligase complex SCF(FBXL7) during mitosis, leading to its degradation by the proteasome. Ubiquitinated by CHFR, leading to its degradation by the proteasome. Ubiquitinated by the anaphase-promoting complex (APC), leading to its degradation by the proteasome. Ubiquitinated by the CUL3-KLHL18 ligase leading to its activation at the centrosome which is required for initiating mitotic entry. Ubiquitination mediated by CUL3-KLHL18 ligase does not lead to its degradation by the proteasome. Highly expressed in testis and weakly in skeletal muscle, thymus and spleen. Also highly expressed in colon, ovarian, prostate, neuroblastoma, breast and cervical cancer cell lines.

The protein resides in the cytoplasm. It is found in the cytoskeleton. The protein localises to the microtubule organizing center. It localises to the centrosome. Its subcellular location is the spindle pole. The protein resides in the centriole. It is found in the cell projection. The protein localises to the neuron projection. It localises to the cilium. Its subcellular location is the cilium basal body. The protein resides in the basolateral cell membrane. The enzyme catalyses L-seryl-[protein] + ATP = O-phospho-L-seryl-[protein] + ADP + H(+). It carries out the reaction L-threonyl-[protein] + ATP = O-phospho-L-threonyl-[protein] + ADP + H(+). Its activity is regulated as follows. Activation of CDK1, appears to be an upstream event of AURKA activation. Phosphatase inhibitor-2 (PPP1R2) and TPX2 act also as activators. Inactivated by the G2 checkpoint. Inhibited by GADD45A and p53/TP53, and through dephosphorylation by protein phosphatase type 1 (PP1). MLN8054 is also a potent and selective inhibitor. Activated during the early phase of cilia disassembly in the presence of CIMAP3. Inhibited by the small molecule inhibitor VX-680. Mitotic serine/threonine kinase that contributes to the regulation of cell cycle progression. Associates with the centrosome and the spindle microtubules during mitosis and plays a critical role in various mitotic events including the establishment of mitotic spindle, centrosome duplication, centrosome separation as well as maturation, chromosomal alignment, spindle assembly checkpoint, and cytokinesis. Required for normal spindle positioning during mitosis and for the localization of NUMA1 and DCTN1 to the cell cortex during metaphase. Required for initial activation of CDK1 at centrosomes. Phosphorylates numerous target proteins, including ARHGEF2, BORA, BRCA1, CDC25B, DLGP5, HDAC6, KIF2A, LATS2, NDEL1, PARD3, PPP1R2, PLK1, RASSF1, TACC3, p53/TP53 and TPX2. Phosphorylates MCRS1 which is required for MCRS1-mediated kinetochore fiber assembly and mitotic progression. Regulates KIF2A tubulin depolymerase activity. Important for microtubule formation and/or stabilization. Required for normal axon formation. Plays a role in microtubule remodeling during neurite extension. Also acts as a key regulatory component of the p53/TP53 pathway, and particularly the checkpoint-response pathways critical for oncogenic transformation of cells, by phosphorylating and destabilizing p53/TP53. Phosphorylates its own inhibitors, the protein phosphatase type 1 (PP1) isoforms, to inhibit their activity. Inhibits cilia outgrowth. Required for cilia disassembly via phosphorylation of HDAC6 and subsequent deacetylation of alpha-tubulin. Regulates protein levels of the anti-apoptosis protein BIRC5 by suppressing the expression of the SCF(FBXL7) E3 ubiquitin-protein ligase substrate adapter FBXL7 through the phosphorylation of the transcription factor FOXP1. The protein is Aurora kinase A of Homo sapiens (Human).